Here is a 415-residue protein sequence, read N- to C-terminus: Camphor 5-monooxygenase (415 aa).

C358 provides a ligand contact to heme.

It belongs to the cytochrome P450 family. Requires heme as cofactor.

Its subcellular location is the cytoplasm. The catalysed reaction is 2 reduced [2Fe-2S]-[putidaredoxin] + (1R,4R)-camphor + O2 + 2 H(+) = (1R,4R,5R)-5-hydroxycamphor + 2 oxidized [2Fe-2S]-[putidaredoxin] + H2O. It functions in the pathway terpene metabolism; (R)-camphor degradation. Involved in a camphor oxidation system. In Pseudomonas putida (Arthrobacter siderocapsulatus), this protein is Camphor 5-monooxygenase (camC).